An 833-amino-acid polypeptide reads, in one-letter code: AdoMet-dependent rRNA methyltransferase SPB1 (833 aa).

S-adenosyl-L-methionine is bound by residues glycine 59, tryptophan 61, aspartate 79, aspartate 95, and aspartate 120. Residue lysine 160 is the Proton acceptor of the active site. Coiled-coil stretches lie at residues 348-389 and 453-481; these read EEEQ…QLNM and RDELAEADELESQLDAMYSNYKERKSERD. Residues 477-493 show a composition bias toward basic and acidic residues; it reads KSERDAKFRAKQARESS. Disordered regions lie at residues 477-532, 592-645, and 776-810; these read KSER…SDDD, KRKL…EKHS, and VTKKAKQKPKVTVVVASGKNRGLSGRPKGVKGKYK. 2 stretches are compositionally biased toward acidic residues: residues 505-532 and 622-634; these read QSDEENEEETKDYVDDDDNSDLSDSDDD and EDGDVDSEYDSEE. The span at 635 to 645 shows a compositional bias: basic and acidic residues; that stretch reads EAKRTKQEKHS. Residues 730–782 are a coiled coil; the sequence is AEAKARKKHRAVARLEKLKKKAGLINDDSDKSEKDKAEEIAKLMRKVTKKAKQ.

The protein belongs to the class I-like SAM-binding methyltransferase superfamily. RNA methyltransferase RlmE family. SPB1 subfamily. In terms of assembly, component of the nucleolar and nucleoplasmic pre-60S ribosomal particle.

It localises to the nucleus. The protein localises to the nucleolus. The enzyme catalyses a ribonucleotide in rRNA + S-adenosyl-L-methionine = a 2'-O-methylribonucleotide in rRNA + S-adenosyl-L-homocysteine + H(+). Its function is as follows. Required for proper assembly of pre-ribosomal particles during the biogenesis of the 60S ribosomal subunit. This is AdoMet-dependent rRNA methyltransferase SPB1 from Kluyveromyces lactis (strain ATCC 8585 / CBS 2359 / DSM 70799 / NBRC 1267 / NRRL Y-1140 / WM37) (Yeast).